A 168-amino-acid chain; its full sequence is Phosphopantetheine adenylyltransferase (168 aa).

T13 contacts substrate. Residues 13 to 14 (TF) and H21 contribute to the ATP site. 3 residues coordinate substrate: K45, L78, and R92. Residues 93 to 95 (GLR), E103, and 128 to 134 (TQFISSG) contribute to the ATP site.

It belongs to the bacterial CoaD family. As to quaternary structure, homohexamer. The cofactor is Mg(2+).

The protein resides in the cytoplasm. It catalyses the reaction (R)-4'-phosphopantetheine + ATP + H(+) = 3'-dephospho-CoA + diphosphate. Its pathway is cofactor biosynthesis; coenzyme A biosynthesis; CoA from (R)-pantothenate: step 4/5. Reversibly transfers an adenylyl group from ATP to 4'-phosphopantetheine, yielding dephospho-CoA (dPCoA) and pyrophosphate. This Wolbachia sp. subsp. Drosophila simulans (strain wRi) protein is Phosphopantetheine adenylyltransferase.